The chain runs to 371 residues: Anhydro-N-acetylmuramic acid kinase (371 aa).

ATP is bound at residue 12-19 (GTSADGID).

This sequence belongs to the anhydro-N-acetylmuramic acid kinase family.

The catalysed reaction is 1,6-anhydro-N-acetyl-beta-muramate + ATP + H2O = N-acetyl-D-muramate 6-phosphate + ADP + H(+). It functions in the pathway amino-sugar metabolism; 1,6-anhydro-N-acetylmuramate degradation. Its pathway is cell wall biogenesis; peptidoglycan recycling. Functionally, catalyzes the specific phosphorylation of 1,6-anhydro-N-acetylmuramic acid (anhMurNAc) with the simultaneous cleavage of the 1,6-anhydro ring, generating MurNAc-6-P. Is required for the utilization of anhMurNAc either imported from the medium or derived from its own cell wall murein, and thus plays a role in cell wall recycling. This is Anhydro-N-acetylmuramic acid kinase from Saccharophagus degradans (strain 2-40 / ATCC 43961 / DSM 17024).